A 783-amino-acid chain; its full sequence is Spindle pole body protein ppc89 (783 aa).

Ser-157 carries the post-translational modification Phosphoserine. Disordered stretches follow at residues 180–216 (FDSPTEALPPKPTTPWRRNGFRSKTTPNLNSGKETPS), 434–458 (KESNVTSKIKSTAENSSKPLSMNEA), 471–504 (ENKSGANTKEMSNGTETAKENCSPQQDSTSPTSG), and 528–610 (LSQS…MKGN). Composition is skewed to polar residues over residues 201 to 216 (RSKTTPNLNSGKETPS), 437 to 453 (NVTSKIKSTAENSSKPL), and 474 to 504 (SGANTKEMSNGTETAKENCSPQQDSTSPTSG). The segment covering 536 to 551 (PVKHRKRRPKSKRRIT) has biased composition (basic residues). Residues 566–590 (ESDEGSEEISLDSEYSDILSDDGDF) show a composition bias toward acidic residues.

It is found in the cytoplasm. Its subcellular location is the cytoskeleton. It localises to the microtubule organizing center. The protein localises to the spindle pole body. Functionally, has a role in meiosis. This is Spindle pole body protein ppc89 (ppc89) from Schizosaccharomyces pombe (strain 972 / ATCC 24843) (Fission yeast).